A 499-amino-acid chain; its full sequence is Transcriptional regulator sdnM (499 aa).

The protein localises to the nucleus. It functions in the pathway antibiotic biosynthesis. Transcriptional regulator; part of the gene cluster that mediates the biosynthesis of sordarin and hypoxysordarin, glycoside antibiotics with a unique tetracyclic diterpene aglycone structure. First, the geranylgeranyl diphosphate synthase sdnC constructs GGDP from farnesyl diphosphate and isopentenyl diphosphate. The diterpene cyclase sdnA then catalyzes the cyclization of GGDP to afford cycloaraneosene. Cycloaraneosene is then hydroxylated four times by the putative cytochrome P450 monooxygenases sdnB, sdnE, sdnF and sdnH to give a hydroxylated cycloaraneosene derivative such as cycloaraneosene-8,9,13,19-tetraol. Although the order of the hydroxylations is unclear, at least C8, C9 and C13 of the cycloaraneosene skeleton are hydroxylated before the sordaricin formation. Dehydration of the 13-hydroxy group of the hydroxylated cycloaraneosene derivative might be catalyzed by an unassigned hypothetical protein such as sdnG and sdnP to construct the cyclopentadiene moiety. The FAD-dependent oxidoreductase sdnN is proposed to catalyze the oxidation at C9 of the hydroxylated cycloaraneosene derivative and also catalyze the Baeyer-Villiger oxidation to give the lactone intermediate. The presumed lactone intermediate would be hydrolyzed to give an acrolein moiety and a carboxylate moiety. Then, [4+2]cycloaddition would occur between the acrolein moiety and the cyclopentadiene moiety to give sordaricin. SdnN might also be involved in the [4+2]cycloaddition after the hypothesized oxidation to accommodate the oxidized product and prompt the [4+2]cycloaddition. GDP-6-deoxy-D-altrose may be biosynthesized from GDP-D-mannose by the putative GDP-mannose-4,6-dehydratase sdnI and the short-chain dehydrogenase sdnK. The glycosyltransferase sdnJ catalyzes the attachment of 6-deoxy-D-altrose onto the 19-hydroxy group of sordaricin to give 4'-O-demethylsordarin. The methyltransferase sdnD would complete the biosynthesis of sordarin. Sordarin can be further modified into hypoxysordarin. The unique acyl chain at the 3'-hydroxy group of hypoxysordarin would be constructed by an iterative type I PKS sdnO and the trans-acting polyketide methyltransferase sdnL. SdnL would be responsible for the introduction of an alpha-methyl group of the polyketide chain. Alternatively, the beta-lactamase-like protein sdnR might be responsible for the cleavage and transfer of the polyketide chain from the PKS sdnO to sordarin. Two putative cytochrome P450 monooxygenases, sdnQ and sdnT, might catalyze the epoxidations of the polyketide chain to complete the biosynthesis of hypoxysordarin. Transcriptional regulators sdnM and sdnS are presumably encoded for the transcriptional regulation of the expression of the sdn gene cluster. The protein is Transcriptional regulator sdnM of Sordaria araneosa (Pleurage araneosa).